Consider the following 382-residue polypeptide: Chorismate synthase (382 aa).

Positions 39 and 45 each coordinate NADP(+). Residues 127 to 129 (RAS), 245 to 246 (QA), Gly290, 305 to 309 (KPIPT), and Arg331 each bind FMN.

The protein belongs to the chorismate synthase family. Homotetramer. FMNH2 is required as a cofactor.

It carries out the reaction 5-O-(1-carboxyvinyl)-3-phosphoshikimate = chorismate + phosphate. The protein operates within metabolic intermediate biosynthesis; chorismate biosynthesis; chorismate from D-erythrose 4-phosphate and phosphoenolpyruvate: step 7/7. Catalyzes the anti-1,4-elimination of the C-3 phosphate and the C-6 proR hydrogen from 5-enolpyruvylshikimate-3-phosphate (EPSP) to yield chorismate, which is the branch point compound that serves as the starting substrate for the three terminal pathways of aromatic amino acid biosynthesis. This reaction introduces a second double bond into the aromatic ring system. In Desulfitobacterium hafniense (strain Y51), this protein is Chorismate synthase.